A 412-amino-acid chain; its full sequence is Ribosomal RNA large subunit methyltransferase G (412 aa).

The segment at 386 to 412 (KAEPHENGESSSDTPNPQSSLYGGVKR) is disordered. Over residues 394–406 (ESSSDTPNPQSSL) the composition is skewed to polar residues.

It belongs to the methyltransferase superfamily. RlmG family.

Its subcellular location is the cytoplasm. It catalyses the reaction guanosine(1835) in 23S rRNA + S-adenosyl-L-methionine = N(2)-methylguanosine(1835) in 23S rRNA + S-adenosyl-L-homocysteine + H(+). Its function is as follows. Specifically methylates the guanine in position 1835 (m2G1835) of 23S rRNA. The chain is Ribosomal RNA large subunit methyltransferase G from Shewanella sediminis (strain HAW-EB3).